We begin with the raw amino-acid sequence, 209 residues long: Pyroglutamyl-peptidase 1 (209 aa).

Residues E85, C149, and H168 contribute to the active site.

The protein belongs to the peptidase C15 family. Monomer.

The protein resides in the cytoplasm. It carries out the reaction Release of an N-terminal pyroglutamyl group from a polypeptide, the second amino acid generally not being Pro.. Removes 5-oxoproline from various penultimate amino acid residues except L-proline. In Mus musculus (Mouse), this protein is Pyroglutamyl-peptidase 1 (Pgpep1).